The sequence spans 404 residues: 26S proteasome regulatory subunit 6A-B (404 aa).

192-199 contributes to the ATP binding site; it reads GPPGTGKT.

This sequence belongs to the AAA ATPase family. As to quaternary structure, may form a heterodimer with a related family member.

Its subcellular location is the cytoplasm. It is found in the nucleus. The 26S proteasome is involved in the ATP-dependent degradation of ubiquitinated proteins. The regulatory (or ATPase) complex confers ATP dependency and substrate specificity to the 26S complex. This chain is 26S proteasome regulatory subunit 6A-B (psmc3-b), found in Xenopus laevis (African clawed frog).